The chain runs to 25 residues: Css54 (25 aa).

In terms of tissue distribution, expressed by the venom gland.

It localises to the secreted. Its subcellular location is the target cell membrane. Its function is as follows. Amphipathic peptide that shows antibacterial activity against E.coli (MIC=12.5 ug/ml) and S.aureus (MIC=12.5 ug/ml). Has hemolytic activity against human erythrocytes (25 uM provokes 83% of hemolysis). May act by disrupting the integrity of the bacterial cell membrane. Increases efficacy of antibiotics (ethambutol, pyrazinamide, isoniazid, rifampicin) when tested against S.aureus, probably by facilitating their incorporation into the bacteria. This chain is Css54, found in Centruroides suffusus (Durango bark scorpion).